A 105-amino-acid polypeptide reads, in one-letter code: Large ribosomal subunit protein bL21 (105 aa).

It belongs to the bacterial ribosomal protein bL21 family. In terms of assembly, part of the 50S ribosomal subunit. Contacts protein L20.

This protein binds to 23S rRNA in the presence of protein L20. In Rickettsia bellii (strain OSU 85-389), this protein is Large ribosomal subunit protein bL21.